The sequence spans 180 residues: Large ribosomal subunit protein uL6c (180 aa).

This sequence belongs to the universal ribosomal protein uL6 family. Part of the 50S ribosomal subunit.

It is found in the plastid. It localises to the chloroplast. Binds 23S rRNA. The protein is Large ribosomal subunit protein uL6c (rpl6) of Pyropia yezoensis (Susabi-nori).